The primary structure comprises 184 residues: MRYEYVPLKDQYEKEIVPALMKEFNYKNIHQVPKLVKIVINMGIGEGSRNYDLIERHANELAKITGQKPIVTRARKSISNFKIRKGMPIGLKVTLRGARMYNFLYKLINIVLPKVRDFRGLDPNSFDGRGNYSFGLSEQLVFPELNPDEVRRIQGMDITIVTTAKTDQEARRLLELFGMPFKRG.

Belongs to the universal ribosomal protein uL5 family. As to quaternary structure, part of the 50S ribosomal subunit; part of the 5S rRNA/L5/L18/L25 subcomplex. Contacts the 5S rRNA and the P site tRNA. Forms a bridge to the 30S subunit in the 70S ribosome.

This is one of the proteins that bind and probably mediate the attachment of the 5S RNA into the large ribosomal subunit, where it forms part of the central protuberance. In the 70S ribosome it contacts protein S13 of the 30S subunit (bridge B1b), connecting the 2 subunits; this bridge is implicated in subunit movement. Contacts the P site tRNA; the 5S rRNA and some of its associated proteins might help stabilize positioning of ribosome-bound tRNAs. The chain is Large ribosomal subunit protein uL5 from Thermotoga maritima (strain ATCC 43589 / DSM 3109 / JCM 10099 / NBRC 100826 / MSB8).